An 82-amino-acid chain; its full sequence is Cysteine proteinase inhibitor A (82 aa).

The protein belongs to the cystatin family.

Functionally, strong inhibitor of papain and ficin but poor inhibitor of cathepsin H, B and L. The sequence is that of Cysteine proteinase inhibitor A from Helianthus annuus (Common sunflower).